The sequence spans 375 residues: MQCALYDAGRCRSCQWITQSVNEQLSAKTADLHRLLAGLPVEQWCAPISGPEQHFRNKAKMVVSGSVEKPLFGMLHRDGTPVDLCACPLYPASFAPVFSALKPFIARAGLTPYNVARKRGELKYLLLTESQFDGGMMLRFVLRSETKLTQLRAALPWLRAQLPQLRVITANIQPVHMAIMEGETEIYLTDQQALAERFNDVPLWIRPQSFFQTNPTVASRLYATARDWVGQLPVRHMWDLFCGVGGFGLHCATPQMQLTGIEIAPEAIACAKQSAAELGLTRLHFQALDSTQFATAQGETPDLVLVNPPRRGIGKPLCDYLAQMAPRFIIYSSCNAQTMAQDIRHLPNYRIQRVQLFDMFPHTAHYEVLTLLCRL.

Residues Cys-3, Cys-11, Cys-14, and Cys-87 each coordinate [4Fe-4S] cluster. Residues Gln-212, Phe-241, Glu-262, and Asn-307 each contribute to the S-adenosyl-L-methionine site. Catalysis depends on Cys-334, which acts as the Nucleophile.

The protein belongs to the class I-like SAM-binding methyltransferase superfamily. RNA M5U methyltransferase family. RlmC subfamily.

It carries out the reaction uridine(747) in 23S rRNA + S-adenosyl-L-methionine = 5-methyluridine(747) in 23S rRNA + S-adenosyl-L-homocysteine + H(+). Functionally, catalyzes the formation of 5-methyl-uridine at position 747 (m5U747) in 23S rRNA. This is 23S rRNA (uracil(747)-C(5))-methyltransferase RlmC from Salmonella typhi.